The sequence spans 1735 residues: Inactive tyrosine-protein kinase PEAK1 (1735 aa).

Disordered regions lie at residues 26–66 (LHQL…PPVA) and 111–145 (LSQK…KISN). Composition is skewed to polar residues over residues 111-121 (LSQKPLNNNSE) and 130-145 (DPQQ…KISN). A Phosphoserine modification is found at serine 282. Disordered regions lie at residues 324 to 410 (NSGV…SVKV), 491 to 514 (GRPK…LTPG), and 537 to 580 (SPRQ…SKTI). The span at 325-336 (SGVSYGQGSVQS) shows a compositional bias: low complexity. The span at 337–365 (TISSDCTSPGSSFTEESRSETASSLSQKV) shows a compositional bias: polar residues. Low complexity predominate over residues 367-378 (NGGISPGNPGNS). Residues 384–393 (TESNFESPPG) are compositionally biased toward polar residues. Residues 498 to 509 (SSSTPNSPVTSP) show a composition bias toward low complexity. 3 positions are modified to phosphoserine: serine 537, serine 569, and serine 584. A compositionally biased stretch (polar residues) spans 566–580 (APTSPTATNISSKTI). Residues tyrosine 632 and tyrosine 638 each carry the phosphotyrosine modification. The residue at position 645 (serine 645) is a Phosphoserine. At tyrosine 662 the chain carries Phosphotyrosine. Disordered stretches follow at residues 663–762 (EEIE…REKA), 800–919 (PDAD…AADA), and 1019–1097 (RNSE…SATY). Polar residues-rich tracts occupy residues 704 to 735 (QEFN…QRPT), 745 to 757 (AQGS…SSNS), and 819 to 839 (LFTS…SPTA). Phosphoserine occurs at positions 824 and 825. Low complexity predominate over residues 847-863 (TKPVTSPPSKLVTSAQS). Residues 864–873 (EPPPPFPPPR) show a composition bias toward pro residues. The span at 879 to 901 (YHASNLLQRHFTNWTKPTSPTRS) shows a compositional bias: polar residues. Serine 897 bears the Phosphoserine mark. Basic and acidic residues-rich tracts occupy residues 902–919 (TEAE…AADA) and 1037–1055 (ACSR…RDPR). The segment covering 1076 to 1086 (EREEEKDDTLD) has biased composition (acidic residues). Position 1141 is a phosphothreonine (threonine 1141). Tyrosine 1177 carries the phosphotyrosine modification. The interval 1274–1300 (EVVGKLRSLHTDALKRLAVKCEDLFMA) is required for homodimerization. A Protein kinase domain is found at 1302–1664 (QKDQLRFGVD…LLWGPREDLF (363 aa)). Serine 1363 carries the phosphoserine modification. Residues 1394 to 1445 (WEDPDAPEKAEDGTEDSEEEGKAETLGGNPEPCSETEPSQKENQRVTNRKQR) are disordered. Residues 1659–1732 (PREDLFQIFT…DSLSYIVKIL (74 aa)) form a required for homodimerization region.

It belongs to the protein kinase superfamily. Homodimer. Interacts with BCAR1 and CRK. Interacts with PRAG1. Interacts (when phosphorylated at Tyr-1177) with SHC1 (via PID domain). Found in a complex with PPP1CA, PPP1CC and SHC1. Interacts (when phosphorylated at Tyr-632) with tensin TNS3 (when phosphorylated on the SH2 domain); TNS3 also interacts with integrins ITGB1, ITGB3 and ITGB5 and mediates their association with PEAK1. Phosphorylated on tyrosine in a CSK-dependent manner in response to adhesion to fibronectin and to EGF stimulation. Phosphorylation at Tyr-662 by a Src family kinase controls subcellular localization to focal adhesion and focal adhesion dynamics. Phosphorylation at Tyr-1177 is essential for binding to SHC1. Phosphorylation at Tyr-632 promotes interaction with tensin TNS3.

Its subcellular location is the cytoplasm. It localises to the cytoskeleton. The protein localises to the cell junction. The protein resides in the focal adhesion. In terms of biological role, probable catalytically inactive kinase. Scaffolding protein that regulates the cytoskeleton to control cell spreading and migration by modulating focal adhesion dynamics. Acts as a scaffold for mediating EGFR signaling. The chain is Inactive tyrosine-protein kinase PEAK1 (Peak1) from Mus musculus (Mouse).